The following is a 345-amino-acid chain: Anthranilate phosphoribosyltransferase (345 aa).

5-phospho-alpha-D-ribose 1-diphosphate is bound by residues Gly-75, 78–79 (GD), Ser-83, 85–88 (NIST), 103–111 (KHGNRAASS), and Gly-115. Residue Gly-75 coordinates anthranilate. Ser-87 contributes to the Mg(2+) binding site. An anthranilate-binding site is contributed by Asn-106. Arg-161 serves as a coordination point for anthranilate. 2 residues coordinate Mg(2+): Asp-219 and Glu-220.

This sequence belongs to the anthranilate phosphoribosyltransferase family. As to quaternary structure, homodimer. Mg(2+) is required as a cofactor.

It carries out the reaction N-(5-phospho-beta-D-ribosyl)anthranilate + diphosphate = 5-phospho-alpha-D-ribose 1-diphosphate + anthranilate. Its pathway is amino-acid biosynthesis; L-tryptophan biosynthesis; L-tryptophan from chorismate: step 2/5. In terms of biological role, catalyzes the transfer of the phosphoribosyl group of 5-phosphorylribose-1-pyrophosphate (PRPP) to anthranilate to yield N-(5'-phosphoribosyl)-anthranilate (PRA). This is Anthranilate phosphoribosyltransferase from Nocardia farcinica (strain IFM 10152).